The following is a 407-amino-acid chain: Peptidase T (407 aa).

His82 contacts Zn(2+). Asp84 is a catalytic residue. A Zn(2+)-binding site is contributed by Asp143. Residue Glu177 is the Proton acceptor of the active site. The Zn(2+) site is built by Glu178, Asp200, and His382.

The protein belongs to the peptidase M20B family. It depends on Zn(2+) as a cofactor.

It localises to the cytoplasm. It carries out the reaction Release of the N-terminal residue from a tripeptide.. Its function is as follows. Cleaves the N-terminal amino acid of tripeptides. This chain is Peptidase T, found in Streptococcus pyogenes serotype M1.